A 151-amino-acid chain; its full sequence is uncharacterized protein (151 aa).

Transmembrane regions (helical) follow at residues 8 to 28 (GIGSGVSLLILRFFLAWEFFE), 60 to 80 (WHVAMGSELIFPFLLIFGVLT), 82 to 102 (FSALSLTILISVAWYSIHADS), and 113 to 133 (LPLIYVVTLLILITQGAGKLS).

The protein belongs to the DoxX family.

It localises to the cell membrane. This is an uncharacterized protein from Haemophilus influenzae (strain ATCC 51907 / DSM 11121 / KW20 / Rd).